We begin with the raw amino-acid sequence, 244 residues long: Mono-ADP-ribosyltransferase C3 (244 aa).

Residues 1–40 (MKGIRKSILCLVLSAGVIAPVTTSIVQSPQKCYACTVDKG) form the signal peptide. The region spanning 44–244 (DTFTEFTNVE…QIMITAMIFK (201 aa)) is the TR mART core domain. Residues Thr80, Asn87, Arg91, 128-131 (RGDD), and 167-169 (RTE) each bind NAD(+). Arg128 is an active-site residue. Ser174 is a catalytic residue. NAD(+) is bound by residues 182-185 (FGGR) and 211-213 (QLE). The active site involves Glu213.

This sequence to exoenzymes 3 of C.limosum and C.botulinum D phage, and to S.aureus ediN. In terms of assembly, monomer.

The protein resides in the secreted. The enzyme catalyses L-asparaginyl-[protein] + NAD(+) = N(4)-(ADP-D-ribosyl)-L-asparaginyl-[protein] + nicotinamide + H(+). Functionally, ADP-ribosylates eukaryotic Rho and Rac proteins on an asparagine residue. The polypeptide is Mono-ADP-ribosyltransferase C3 (Clostridium botulinum C phage (Clostridium botulinum C bacteriophage)).